Here is a 77-residue protein sequence, read N- to C-terminus: U3-theraphotoxin-Hhn1k (77 aa).

Residues 1-14 (TFAGLVLLFVVCYA) form the signal peptide. Positions 15 to 42 (SESEEKEFPKEMLSSIFAVDNDFKQEER) are excised as a propeptide. 2 disulfides stabilise this stretch: Cys-44–Cys-57 and Cys-56–Cys-69.

It belongs to the neurotoxin 10 (Hwtx-1) family. 51 (Hntx-8) subfamily. Hntx-8 sub-subfamily. As to expression, expressed by the venom gland.

The protein resides in the secreted. Functionally, ion channel inhibitor. The sequence is that of U3-theraphotoxin-Hhn1k from Cyriopagopus hainanus (Chinese bird spider).